The sequence spans 213 residues: NADH-quinone oxidoreductase subunit I (213 aa).

4Fe-4S ferredoxin-type domains are found at residues 74 to 103 and 113 to 142; these read RFIE…METS and ENYS…HGTE. [4Fe-4S] cluster contacts are provided by Cys83, Cys86, Cys89, Cys93, Cys122, Cys125, Cys128, and Cys132.

This sequence belongs to the complex I 23 kDa subunit family. NDH-1 is composed of 14 different subunits. Subunits NuoA, H, J, K, L, M, N constitute the membrane sector of the complex. Requires [4Fe-4S] cluster as cofactor.

The protein localises to the cell inner membrane. The enzyme catalyses a quinone + NADH + 5 H(+)(in) = a quinol + NAD(+) + 4 H(+)(out). Its function is as follows. NDH-1 shuttles electrons from NADH, via FMN and iron-sulfur (Fe-S) centers, to quinones in the respiratory chain. The immediate electron acceptor for the enzyme in this species is believed to be ubiquinone. Couples the redox reaction to proton translocation (for every two electrons transferred, four hydrogen ions are translocated across the cytoplasmic membrane), and thus conserves the redox energy in a proton gradient. This is NADH-quinone oxidoreductase subunit I from Campylobacter jejuni subsp. jejuni serotype O:23/36 (strain 81-176).